A 66-amino-acid polypeptide reads, in one-letter code: Pancreatic polypeptide prohormone (66 aa).

The residue at position 36 (Y36) is a Tyrosine amide. A propeptide spanning residues 60 to 66 is cleaved from the precursor; it reads ELSPMDV.

Belongs to the NPY family.

The protein localises to the secreted. Hormone secreted by pancreatic cells that acts as a regulator of pancreatic and gastrointestinal functions probably by signaling through the G protein-coupled receptor NPY4R2. This is Pancreatic polypeptide prohormone (PPY) from Felis catus (Cat).